Consider the following 303-residue polypeptide: Heme A synthase (303 aa).

Residues Met-1–Lys-8 lie on the Cytoplasmic side of the membrane. The chain crosses the membrane as a helical span at residues Trp-9–Thr-29. Residues Lys-30 to Ser-67 lie on the Extracellular side of the membrane. Cys-37 and Cys-44 are disulfide-bonded. Residue Glu-60 is part of the active site. Residue His-63 participates in heme o binding. Residues Ala-68–Ile-88 form a helical membrane-spanning segment. The Cytoplasmic portion of the chain corresponds to Lys-89 to Pro-93. Residues Leu-94–Ile-114 form a helical membrane-spanning segment. The Extracellular portion of the chain corresponds to Trp-115 to His-125. His-125 is a binding site for heme o. A helical membrane pass occupies residues Phe-126 to Ile-146. The Cytoplasmic portion of the chain corresponds to Asp-147 to Arg-163. Residues Leu-164 to His-184 traverse the membrane as a helical segment. The Extracellular segment spans residues Ala-185 to Arg-215. Residue His-214 participates in heme b binding. A helical membrane pass occupies residues Ile-216–Tyr-236. The Cytoplasmic portion of the chain corresponds to Pro-237–Tyr-244. The helical transmembrane segment at Gly-245–Met-265 threads the bilayer. At Thr-266 to Leu-270 the chain is on the extracellular side. A helical membrane pass occupies residues Leu-271 to Ile-291. His-276 provides a ligand contact to heme b. Over Met-292–Gln-303 the chain is Cytoplasmic.

Belongs to the COX15/CtaA family. Type 1 subfamily. In terms of assembly, interacts with CtaB. It depends on heme b as a cofactor.

It localises to the cell membrane. The enzyme catalyses Fe(II)-heme o + 2 A + H2O = Fe(II)-heme a + 2 AH2. It functions in the pathway porphyrin-containing compound metabolism; heme A biosynthesis; heme A from heme O: step 1/1. Functionally, catalyzes the conversion of heme O to heme A by two successive hydroxylations of the methyl group at C8. The first hydroxylation forms heme I, the second hydroxylation results in an unstable dihydroxymethyl group, which spontaneously dehydrates, resulting in the formyl group of heme A. In Staphylococcus aureus (strain MSSA476), this protein is Heme A synthase.